We begin with the raw amino-acid sequence, 256 residues long: uncharacterized protein (256 aa).

The first 24 residues, 1 to 24 (MIKRVNKLVLGISLLFLVISITAG), serve as a signal peptide directing secretion. Residue Cys25 is the site of N-palmitoyl cysteine attachment. A lipid anchor (S-diacylglycerol cysteine) is attached at Cys25.

Belongs to the staphylococcal tandem lipoprotein family.

The protein resides in the cell membrane. This is an uncharacterized protein from Staphylococcus aureus (strain NCTC 8325 / PS 47).